The sequence spans 85 residues: Small ribosomal subunit protein bS18 (85 aa).

The protein belongs to the bacterial ribosomal protein bS18 family. Part of the 30S ribosomal subunit. Forms a tight heterodimer with protein bS6.

Its function is as follows. Binds as a heterodimer with protein bS6 to the central domain of the 16S rRNA, where it helps stabilize the platform of the 30S subunit. The polypeptide is Small ribosomal subunit protein bS18 (Helicobacter acinonychis (strain Sheeba)).